A 618-amino-acid polypeptide reads, in one-letter code: UvrABC system protein C (618 aa).

Residues 19 to 97 (SEPGIYRMLD…IKALRPKYNV (79 aa)) form the GIY-YIG domain. In terms of domain architecture, UVR spans 208-243 (QIILDALAERMKQAVNQLNFEEAAVLRDQIKNLRLI).

The protein belongs to the UvrC family. As to quaternary structure, interacts with UvrB in an incision complex.

It is found in the cytoplasm. The UvrABC repair system catalyzes the recognition and processing of DNA lesions. UvrC both incises the 5' and 3' sides of the lesion. The N-terminal half is responsible for the 3' incision and the C-terminal half is responsible for the 5' incision. In Legionella pneumophila (strain Paris), this protein is UvrABC system protein C.